Consider the following 36-residue polypeptide: MKKYGEIRWSEVVRKAIAEYLEKLEEIETEVGSKEL.

This is an uncharacterized protein from Archaeoglobus fulgidus (strain ATCC 49558 / DSM 4304 / JCM 9628 / NBRC 100126 / VC-16).